The chain runs to 414 residues: Procollagen C-endopeptidase enhancer 2 (414 aa).

The signal sequence occupies residues 1–22 (MGGASACIPLCLLLATARMARP). Disulfide bonds link C32-C58, C85-C106, C153-C180, C207-C230, C296-C363, C300-C366, and C311-C414. 2 consecutive CUB domains span residues 32-143 (CGGI…YSAA) and 153-267 (CGGR…YKFR). The NTR domain maps to 296 to 414 (CQQKCRRMGT…PMNALKNKQC (119 aa)). Residue N354 is glycosylated (N-linked (GlcNAc...) asparagine).

Interacts with heparin with high affinity, and type I or II collagen. Post-translationally, O-glycosylated; contains sialic acid.

Its subcellular location is the secreted. Functionally, binds to the C-terminal propeptide of types I and II procollagens and may enhance the cleavage of that propeptide by BMP1. The sequence is that of Procollagen C-endopeptidase enhancer 2 (Pcolce2) from Mus musculus (Mouse).